The following is a 260-amino-acid chain: MPLTPADVHNVAFSKPPIGKRGYNEDEVDAFLDLVENELTRLIEENSDLRQRINELDQELAAGGGAGVTPQATQAIPAYEPEPGKPAPAAVSAGMNEEQALKAARVLSLAQDTADRLTNTAKAESDKMLADARANAEQILGEARHTADATVAEARQRADAMLADAQSRSEAQLRQAQEKADALQADAERKHSEIMGTINQQRAVLEGRLEQLRTFEREYRTRLKTYLESQLEELGQRGSAAPVDSNADAGGFDQFNRGKN.

The stretch at 31 to 64 (FLDLVENELTRLIEENSDLRQRINELDQELAAGG) forms a coiled coil. A Phosphothreonine modification is found at threonine 73. Positions 161–196 (MLADAQSRSEAQLRQAQEKADALQADAERKHSEIMG) form a coiled coil. The interval 233-260 (ELGQRGSAAPVDSNADAGGFDQFNRGKN) is disordered.

Belongs to the DivIVA family. Forms homooligomers. Post-translationally, phosphorylated by PknA. Phosphorylation enhances polar localization, which in turn heightens polar peptidoglycan biosynthesis.

It localises to the cytoplasm. Functionally, important for maintaining cell shape and cell wall integrity by localizing peptidoglycan synthesis to the cell poles. The sequence is that of Cell wall synthesis protein Wag31 (wag31) from Mycobacterium tuberculosis (strain CDC 1551 / Oshkosh).